The following is a 143-amino-acid chain: Crossover junction endodeoxyribonuclease Hjc (143 aa).

Residue glutamate 11 participates in Mg(2+) binding. Serine 31 is an active-site residue. Mg(2+) contacts are provided by aspartate 41 and glutamate 54.

Belongs to the Holliday junction resolvase Hjc family. Homodimer. Mg(2+) is required as a cofactor.

It catalyses the reaction Endonucleolytic cleavage at a junction such as a reciprocal single-stranded crossover between two homologous DNA duplexes (Holliday junction).. Its function is as follows. A structure-specific endonuclease that resolves Holliday junction (HJ) intermediates during genetic recombination. Cleaves 4-way DNA junctions introducing paired nicks in opposing strands, leaving a 5'-terminal phosphate and a 3'-terminal hydroxyl group that are ligated to produce recombinant products. Redundant function with Holliday junction resolvase Hje. The chain is Crossover junction endodeoxyribonuclease Hjc from Sulfolobus acidocaldarius (strain ATCC 33909 / DSM 639 / JCM 8929 / NBRC 15157 / NCIMB 11770).